We begin with the raw amino-acid sequence, 471 residues long: Cysteine--tRNA ligase (471 aa).

Position 29 (Cys29) interacts with Zn(2+). The 'HIGH' region signature appears at 31–41; sequence PTVYDYFHIGN. Residues Cys212, His237, and Glu241 each coordinate Zn(2+). A 'KMSKS' region motif is present at residues 269 to 273; sequence KMSKS. Lys272 contacts ATP.

Belongs to the class-I aminoacyl-tRNA synthetase family. Monomer. Zn(2+) is required as a cofactor.

The protein localises to the cytoplasm. It catalyses the reaction tRNA(Cys) + L-cysteine + ATP = L-cysteinyl-tRNA(Cys) + AMP + diphosphate. This chain is Cysteine--tRNA ligase, found in Symbiobacterium thermophilum (strain DSM 24528 / JCM 14929 / IAM 14863 / T).